The chain runs to 105 residues: Replication restart protein PriB (105 aa).

Positions 1–102 constitute an SSB domain; sequence MTANRLTLSG…LHAEQIELID (102 aa).

The protein belongs to the PriB family. Homodimer. Interacts with PriA and DnaT. Component of the replication restart primosome. Primosome assembly occurs via a 'hand-off' mechanism. PriA binds to replication forks, subsequently PriB then DnaT bind; DnaT then displaces ssDNA to generate the helicase loading substrate.

In terms of biological role, involved in the restart of stalled replication forks, which reloads the replicative helicase on sites other than the origin of replication; the PriA-PriB pathway is the major replication restart pathway. During primosome assembly it facilitates complex formation between PriA and DnaT on DNA; stabilizes PriA on DNA. Stimulates the DNA unwinding activity of PriA helicase. In Serratia proteamaculans (strain 568), this protein is Replication restart protein PriB.